Reading from the N-terminus, the 424-residue chain is Adenylyltransferase and sulfurtransferase UBA4 (424 aa).

Residues glycine 76, aspartate 97, 104–108 (TNLHR), lysine 121, and 165–166 (DS) each bind ATP. Residues cysteine 206 and cysteine 209 each coordinate Zn(2+). The Glycyl thioester intermediate; for adenylyltransferase activity role is filled by cysteine 223. Cysteine 283 contacts Zn(2+). A Rhodanese domain is found at 326-422 (RNSDHVLLDV…WYSEVDQNIP (97 aa)). The active-site Cysteine persulfide intermediate; for sulfurtransferase activity is cysteine 382.

In the N-terminal section; belongs to the HesA/MoeB/ThiF family. UBA4 subfamily. The cofactor is Zn(2+).

The protein resides in the cytoplasm. It is found in the cytosol. It participates in tRNA modification; 5-methoxycarbonylmethyl-2-thiouridine-tRNA biosynthesis. Plays a central role in 2-thiolation of mcm(5)S(2)U at tRNA wobble positions of cytosolic tRNA(Lys), tRNA(Glu) and tRNA(Gln). Acts by mediating the C-terminal thiocarboxylation of sulfur carrier URM1. Its N-terminus first activates URM1 as acyl-adenylate (-COAMP), then the persulfide sulfur on the catalytic cysteine is transferred to URM1 to form thiocarboxylation (-COSH) of its C-terminus. The reaction probably involves hydrogen sulfide that is generated from the persulfide intermediate and that acts as a nucleophile towards URM1. Subsequently, a transient disulfide bond is formed. Does not use thiosulfate as sulfur donor; NFS1 probably acting as a sulfur donor for thiocarboxylation reactions. Prior mcm(5) tRNA modification by the elongator complex is required for 2-thiolation. May also be involved in protein urmylation. This chain is Adenylyltransferase and sulfurtransferase UBA4, found in Meyerozyma guilliermondii (strain ATCC 6260 / CBS 566 / DSM 6381 / JCM 1539 / NBRC 10279 / NRRL Y-324) (Yeast).